The chain runs to 96 residues: UPF0102 protein ML1607 (96 aa).

Belongs to the UPF0102 family.

This chain is UPF0102 protein ML1607, found in Mycobacterium leprae (strain TN).